Consider the following 562-residue polypeptide: BOS complex subunit NCLN (562 aa).

The N-terminal stretch at 1–41 (MLEEAGEVLESVLKASCLPLSFLLFVPAVLLLLGPPPAAEA) is a signal peptide. Residues 42–521 (AHESTVYRMQ…VMNAYRVKPA (480 aa)) lie on the Extracellular side of the membrane. A glycan (N-linked (GlcNAc...) asparagine) is linked at N240. Residues 420 to 447 (GFDEGHLQPNREGSTCRSADLHGSDADP) are disordered. The chain crosses the membrane as a helical span at residues 522-542 (IFDLLLAVCIAAYLGVAYVAV). Residues 543-562 (QNFGLLYRMIQRLSLKTKQQ) are Cytoplasmic-facing.

This sequence belongs to the nicastrin family. As to quaternary structure, component of the multi-pass translocon (MPT) complex.

It localises to the endoplasmic reticulum membrane. Functionally, component of the multi-pass translocon (MPT) complex that mediates insertion of multi-pass membrane proteins into the lipid bilayer of membranes. The MPT complex takes over after the SEC61 complex: following membrane insertion of the first few transmembrane segments of proteins by the SEC61 complex, the MPT complex occludes the lateral gate of the SEC61 complex to promote insertion of subsequent transmembrane regions. May antagonize Nodal signaling and subsequent organization of axial structures during mesodermal patterning, via its interaction with NOMO. This is BOS complex subunit NCLN (NCLN) from Gallus gallus (Chicken).